The following is a 492-amino-acid chain: Glutamyl-tRNA(Gln) amidotransferase subunit A (492 aa).

Active-site charge relay system residues include lysine 78 and serine 158. The active-site Acyl-ester intermediate is the serine 182.

This sequence belongs to the amidase family. GatA subfamily. As to quaternary structure, heterotrimer of A, B and C subunits.

It catalyses the reaction L-glutamyl-tRNA(Gln) + L-glutamine + ATP + H2O = L-glutaminyl-tRNA(Gln) + L-glutamate + ADP + phosphate + H(+). Allows the formation of correctly charged Gln-tRNA(Gln) through the transamidation of misacylated Glu-tRNA(Gln) in organisms which lack glutaminyl-tRNA synthetase. The reaction takes place in the presence of glutamine and ATP through an activated gamma-phospho-Glu-tRNA(Gln). The chain is Glutamyl-tRNA(Gln) amidotransferase subunit A from Rickettsia akari (strain Hartford).